The following is a 203-amino-acid chain: DNA-directed RNA polymerase subunit gamma (203 aa).

The Zn(2+) site is built by Cys-34, Cys-36, Cys-49, and Cys-52.

It belongs to the RNA polymerase beta' chain family. RpoC1 subfamily. In terms of assembly, in cyanobacteria the RNAP catalytic core is composed of 2 alpha, 1 beta, 1 beta', 1 gamma and 1 omega subunit. When a sigma factor is associated with the core the holoenzyme is formed, which can initiate transcription. Zn(2+) is required as a cofactor.

It catalyses the reaction RNA(n) + a ribonucleoside 5'-triphosphate = RNA(n+1) + diphosphate. Its function is as follows. DNA-dependent RNA polymerase catalyzes the transcription of DNA into RNA using the four ribonucleoside triphosphates as substrates. The sequence is that of DNA-directed RNA polymerase subunit gamma (rpoC1) from Prochlorothrix hollandica.